The primary structure comprises 447 residues: uncharacterized protein (447 aa).

Positions 87, 93, 96, and 162 each coordinate [4Fe-4S] cluster. Positions 284, 313, 334, and 375 each coordinate S-adenosyl-L-methionine. The active-site Nucleophile is C402.

This sequence belongs to the class I-like SAM-binding methyltransferase superfamily. RNA M5U methyltransferase family.

This is an uncharacterized protein from Nanoarchaeum equitans (strain Kin4-M).